We begin with the raw amino-acid sequence, 472 residues long: Riboflavin transporter RibJ (472 aa).

Residues 1–11 (MLPCFTRKPVD) are Cytoplasmic-facing. The chain crosses the membrane as a helical span at residues 12–32 (HPLGFLVALSGLLMQLMSYGI). The Extracellular portion of the chain corresponds to 33 to 58 (DNSYSIFSDDMHKDPSLGYPSVTTIS). Residues 59 to 79 (LGNSVSLGLSPAFGVLCGFLV) form a helical membrane-spanning segment. Residues 80 to 85 (DRVPPR) are Cytoplasmic-facing. The chain crosses the membrane as a helical span at residues 86–106 (LMMAVSTLMLFAGLWLSSTFA). At 107-108 (HN) the chain is on the extracellular side. The N-linked (GlcNAc...) asparagine glycan is linked to asparagine 108. A helical membrane pass occupies residues 109 to 129 (VTAVTFSYCLLASISSACMLS). The Cytoplasmic portion of the chain corresponds to 130-144 (PGAAATSSWFNRYQG). A helical membrane pass occupies residues 145–165 (LAMGINFSGGGVGSAIIPSLA). The Extracellular portion of the chain corresponds to 166–179 (GKWVVAYGWRKTFR). Residues 180-196 (LMSAFCAIGVVATLLSA) traverse the membrane as a helical segment. The Cytoplasmic portion of the chain corresponds to 197-271 (RRAPPKKEEA…TMFSRAFLGN (75 aa)). The tract at residues 200–248 (PPKKEEAGPSEYDEGQERQEQGEEEQAHTDEENRNNNNSNGETTPARRG) is disordered. Residues 214-233 (GQERQEQGEEEQAHTDEENR) are compositionally biased toward basic and acidic residues. The chain crosses the membrane as a helical span at residues 272–292 (FFCWLIFSWAFYSLIYVAVPY). At 293–315 (VSSMGKAGTVYADISPIPTDIAS) the chain is on the extracellular side. The chain crosses the membrane as a helical span at residues 316-336 (TLFTFYGVFQIVGSILVGWLA). Over 337–341 (TGTTN) the chain is Cytoplasmic. Residues 342–362 (EFAYVLCATIGGIFCAFLGFC) traverse the membrane as a helical segment. The Extracellular segment spans residues 363–365 (RSY). A helical transmembrane segment spans residues 366–386 (VAFALLLCVIGFCMAGMFAVM). At 387–399 (PALIAERLYGPNL) the chain is on the cytoplasmic side. Residues 400–420 (GFYMGAVFLAGVVGGFSAPPI) traverse the membrane as a helical segment. The Extracellular portion of the chain corresponds to 421 to 434 (QAELQQRHYGNYTY). A glycan (N-linked (GlcNAc...) asparagine) is linked at asparagine 431. Residues 435 to 455 (VCVFMSACMTLAAAVCYITMW) traverse the membrane as a helical segment. Over 456–472 (RDKRVRIVSAAAEAKLA) the chain is Cytoplasmic.

The protein belongs to the major facilitator superfamily. RibJ family.

The protein localises to the cell membrane. Functionally, transporter involved in riboflavin (vitamin B2) uptake. Also transports FMN and FAD. The chain is Riboflavin transporter RibJ from Trypanosoma cruzi (strain CL Brener).